Reading from the N-terminus, the 147-residue chain is Deoxyuridine 5'-triphosphate nucleotidohydrolase (147 aa).

Residue Arg-24 participates in Mg(2+) binding. DUTP contacts are provided by residues 68–70, 82–85, Tyr-88, Gly-93, Ile-95, and Arg-111; these read PRS and GVID.

The protein belongs to the dUTPase family. Mg(2+) is required as a cofactor.

It carries out the reaction dUTP + H2O = dUMP + diphosphate + H(+). Its function is as follows. This enzyme is involved in nucleotide metabolism: it produces dUMP, the immediate precursor of thymidine nucleotides and it decreases the intracellular concentration of dUTP so that uracil cannot be incorporated into DNA. The protein is Deoxyuridine 5'-triphosphate nucleotidohydrolase (OPG046) of Oryctolagus cuniculus (Rabbit).